We begin with the raw amino-acid sequence, 894 residues long: Transcriptional activator/repressor GIS1 (894 aa).

Residues 12-53 form the JmjN domain; that stretch reads VPVFKPSMMEFANFQYFIDEITKFGIENGIVKVIPPKEWLEL. Ser70 carries the post-translational modification Phosphoserine. Residues 90–110 adopt a coiled-coil conformation; the sequence is ENEYDNKSYNLTQWKNLAESL. The JmjC domain maps to 170–324; that stretch reads PYDLTLWNLN…VRKQPLKCGC (155 aa). The Bipartite nuclear localization signal signature appears at 316–332; that stretch reads RKQPLKCGCGNKKEERK. The segment at 324–355 is disordered; the sequence is CGNKKEERKSGPFSNLSYDSNESEQRGSITDN. Residues 335 to 354 are compositionally biased toward polar residues; the sequence is PFSNLSYDSNESEQRGSITD. At Ser343 the chain carries Phosphoserine. A coiled-coil region spans residues 361–385; sequence QKVRSFDELLNHSSQELQNLEDNKN. A compositionally biased stretch (low complexity) spans 521–554; the sequence is NISSTNNSANNSSSNNNVSTVPSSMMHSSTLNGT. The interval 521-558 is disordered; the sequence is NISSTNNSANNSSSNNNVSTVPSSMMHSSTLNGTSGLG. A phosphoserine mark is found at Ser690, Ser694, Ser696, Ser734, and Ser747. The span at 756 to 768 shows a compositional bias: low complexity; it reads LNGNDNSNLDSNN. Residues 756–810 form a disordered region; it reads LNGNDNSNLDSNNFDYSFTGNKQESNPSILNNNTNNNDNYRTSSMNNNGNNYQAH. 2 stretches are compositionally biased toward polar residues: residues 769–785 and 795–810; these read FDYS…PSIL and YRTS…YQAH. A C2H2-type 1 zinc finger spans residues 828 to 851; that stretch reads YICRECNRQFSSGHHLTRHKKSVH. Residues 857-882 form a C2H2-type 2; atypical zinc finger; that stretch reads HSCPRCGKRFKRRDHVLQHLNKKIPC.

The protein localises to the nucleus. In terms of biological role, transcription factor involved in the regulation of gene expression upon nutrient starvation. Recognizes and binds to the post-diauxic-shift element 5'-T[AT]AGGGAT-3' in the promoter region. Can act as a transcriptional activator (e.g. of stress genes like SSA3, HSP12 and HSP26) as well as a repressor (e.g. of pyrophosphate phosphatase DPP1). GIS1 also acts as a DNA damage-responsive transcriptional repressor of photolyase PHR1. This chain is Transcriptional activator/repressor GIS1 (GIS1), found in Saccharomyces cerevisiae (strain ATCC 204508 / S288c) (Baker's yeast).